Reading from the N-terminus, the 261-residue chain is Small ribosomal subunit protein uS2 (261 aa).

Residues 223–261 form a disordered region; the sequence is EGKQGQDDSEDVEKEMADKAAAEDDEEESIEVVVEKSED.

The protein belongs to the universal ribosomal protein uS2 family.

The polypeptide is Small ribosomal subunit protein uS2 (Lactobacillus johnsonii (strain CNCM I-12250 / La1 / NCC 533)).